We begin with the raw amino-acid sequence, 97 residues long: Scorpine-like peptide Ev37 (97 aa).

Positions 1-19 (MNSKLTVIVLLALITIASC) are cleaved as a signal peptide. The region spanning 55-95 (QNLCAFNVDTVGMCDADCKRQGKAKGVCHGTKCKCDVELSY) is the BetaSPN-type CS-alpha/beta domain. 3 disulfides stabilise this stretch: cysteine 58–cysteine 82, cysteine 68–cysteine 87, and cysteine 72–cysteine 89.

This sequence belongs to the long chain scorpion toxin family. Class 3 subfamily. Expressed by the venom gland.

It is found in the secreted. Functionally, selectively inhibits Kv1.3/KCNA3 channel (IC(50)=0.95 uM). Both N-terminal and C-terminal domains are likely involved in the interaction with Kv1.3/KCNA3, since neither its N-terminal domain (1-36) nor its C-terminal domain (37-78) block Kv1.3/KCNA3 channel. The chain is Scorpine-like peptide Ev37 from Euscorpiops validus (Scorpion).